Consider the following 254-residue polypeptide: Undecaprenyl-diphosphatase (254 aa).

8 helical membrane-spanning segments follow: residues 1–21 (MGII…FLPV), 41–61 (AHKA…VFLY), 75–95 (LIIA…IIKG), 96–116 (LFSP…FIAV), 130–150 (ILKI…IAMI), 174–194 (AEFS…YDIM), 210–230 (TGFV…IGFV), and 234–254 (NFVP…LFVL).

This sequence belongs to the UppP family.

The protein localises to the cell inner membrane. It carries out the reaction di-trans,octa-cis-undecaprenyl diphosphate + H2O = di-trans,octa-cis-undecaprenyl phosphate + phosphate + H(+). Catalyzes the dephosphorylation of undecaprenyl diphosphate (UPP). Confers resistance to bacitracin. This chain is Undecaprenyl-diphosphatase, found in Persephonella marina (strain DSM 14350 / EX-H1).